Consider the following 262-residue polypeptide: Zinc finger protein ehn-3 (262 aa).

4 C2H2-type zinc fingers span residues 2 to 24 (EKCDICHQKFSNKTNLNRHKVMH), 30 to 52 (FECQFCRRPFFRNDRMKEHMMTH), 59 to 84 (FECPITACNSKFNSFTSLQFHVDSEH), and 92 to 115 (AKCKSCIKWFNSSHRLLLHFHTAH). Residues 179 to 204 (SVKSAKELSPTPSTEIETPEEEELDG) form a disordered region. Residues 185–194 (ELSPTPSTEI) are compositionally biased toward low complexity. A compositionally biased stretch (acidic residues) spans 195–204 (ETPEEEELDG). 2 consecutive C2H2-type zinc fingers follow at residues 208-230 (WYCDYCKIRFDDKVMWYLHSGLH) and 236-260 (FKCSLCGSLCDGKYDFAAHLVYANH).

Belongs to the krueppel C2H2-type zinc-finger protein family.

The protein localises to the nucleus. Together with the zinc finger protein ztf-16, plays a role in gonadogenesis, specifically in somatic gonad precursor cell development. This is possibly by regulating tra-1 gene expression. In terms of biological role, required for proper gonadal primordium assembly and somatic gonad precursor cell morphology. This is Zinc finger protein ehn-3 from Caenorhabditis elegans.